The chain runs to 329 residues: D-alanine--D-alanine ligase (329 aa).

Residues 120–326 (KLWLSAIGIP…FAHYLEQILR (207 aa)) enclose the ATP-grasp domain. An ATP-binding site is contributed by 150-205 (ALAKWGKVFIKAASQGSSVGCYSASNETDLLQGIKDAFGYSEQVLIEKAVKPRELE). Mg(2+) contacts are provided by aspartate 280, glutamate 293, and asparagine 295.

The protein belongs to the D-alanine--D-alanine ligase family. It depends on Mg(2+) as a cofactor. Requires Mn(2+) as cofactor.

The protein localises to the cytoplasm. The enzyme catalyses 2 D-alanine + ATP = D-alanyl-D-alanine + ADP + phosphate + H(+). It functions in the pathway cell wall biogenesis; peptidoglycan biosynthesis. Cell wall formation. The sequence is that of D-alanine--D-alanine ligase from Aeromonas salmonicida (strain A449).